A 309-amino-acid polypeptide reads, in one-letter code: CDK-activating kinase assembly factor MAT1 (309 aa).

Met1 is modified (N-acetylmethionine). The RING-type zinc finger occupies 6–50; the sequence is CPRCKTTKYRNPSLKLMVNVCGHTLCESCVDLLFVRGAGNCPECG. Thr51 is subject to Phosphothreonine. In terms of domain architecture, UIM spans 142-161; it reads REQEELEEALEVERQEHEQR. Ser279 is subject to Phosphoserine.

In terms of assembly, associates primarily with CDK7 and cyclin H to form the CAK complex. CAK can further associate with the core-TFIIH to form the TFIIH basal transcription factor.

Its subcellular location is the nucleus. Functionally, stabilizes the cyclin H-CDK7 complex to form a functional CDK-activating kinase (CAK) enzymatic complex. CAK activates the cyclin-associated kinases CDK1, CDK2, CDK4 and CDK6 by threonine phosphorylation. CAK complexed to the core-TFIIH basal transcription factor activates RNA polymerase II by serine phosphorylation of the repetitive C-terminal domain (CTD) of its large subunit (POLR2A), allowing its escape from the promoter and elongation of the transcripts. Involved in cell cycle control and in RNA transcription by RNA polymerase II. This is CDK-activating kinase assembly factor MAT1 (Mnat1) from Mus musculus (Mouse).